The primary structure comprises 87 residues: Toxin Cll4 (87 aa).

Positions Met1 to Ala19 are cleaved as a signal peptide. The LCN-type CS-alpha/beta domain maps to Lys20–Asn85. 4 cysteine pairs are disulfide-bonded: Cys31-Cys84, Cys35-Cys60, Cys44-Cys65, and Cys48-Cys67. Asparagine amide is present on Asn85.

Belongs to the long (4 C-C) scorpion toxin superfamily. Sodium channel inhibitor family. Beta subfamily. As to expression, expressed by the venom gland.

It localises to the secreted. Its function is as follows. Beta toxins bind voltage-independently at site-4 of sodium channels (Nav) and shift the voltage of activation toward more negative potentials thereby affecting sodium channel activation and promoting spontaneous and repetitive firing. This chain is Toxin Cll4, found in Centruroides limpidus (Mexican scorpion).